The sequence spans 353 residues: Photosystem II protein D1 (353 aa).

At Thr2 the chain carries N-acetylthreonine. The residue at position 2 (Thr2) is a Phosphothreonine. Transmembrane regions (helical) follow at residues Tyr29–Ser46, His118–Leu133, and Trp142–Ala156. A chlorophyll a-binding site is contributed by His118. Tyr126 is a binding site for pheophytin a. [CaMn4O5] cluster contacts are provided by Asp170 and Glu189. A helical transmembrane segment spans residues Phe197–Leu218. His198 serves as a coordination point for chlorophyll a. His215 is an a quinone binding site. Residues His215 and His272 each coordinate Fe cation. Residues Phe274–Leu288 form a helical membrane-spanning segment. The [CaMn4O5] cluster site is built by His332, Glu333, Asp342, and Ala344. Positions Ala345–Gly353 are excised as a propeptide.

The protein belongs to the reaction center PufL/M/PsbA/D family. In terms of assembly, PSII is composed of 1 copy each of membrane proteins PsbA, PsbB, PsbC, PsbD, PsbE, PsbF, PsbH, PsbI, PsbJ, PsbK, PsbL, PsbM, PsbT, PsbX, PsbY, PsbZ, Psb30/Ycf12, at least 3 peripheral proteins of the oxygen-evolving complex and a large number of cofactors. It forms dimeric complexes. Requires The D1/D2 heterodimer binds P680, chlorophylls that are the primary electron donor of PSII, and subsequent electron acceptors. It shares a non-heme iron and each subunit binds pheophytin, quinone, additional chlorophylls, carotenoids and lipids. D1 provides most of the ligands for the Mn4-Ca-O5 cluster of the oxygen-evolving complex (OEC). There is also a Cl(-1) ion associated with D1 and D2, which is required for oxygen evolution. The PSII complex binds additional chlorophylls, carotenoids and specific lipids. as cofactor. In terms of processing, tyr-161 forms a radical intermediate that is referred to as redox-active TyrZ, YZ or Y-Z. Post-translationally, C-terminally processed by CTPA; processing is essential to allow assembly of the oxygen-evolving complex and thus photosynthetic growth.

It localises to the plastid. Its subcellular location is the chloroplast thylakoid membrane. The enzyme catalyses 2 a plastoquinone + 4 hnu + 2 H2O = 2 a plastoquinol + O2. Photosystem II (PSII) is a light-driven water:plastoquinone oxidoreductase that uses light energy to abstract electrons from H(2)O, generating O(2) and a proton gradient subsequently used for ATP formation. It consists of a core antenna complex that captures photons, and an electron transfer chain that converts photonic excitation into a charge separation. The D1/D2 (PsbA/PsbD) reaction center heterodimer binds P680, the primary electron donor of PSII as well as several subsequent electron acceptors. This is Photosystem II protein D1 from Brassica napus (Rape).